The following is a 342-amino-acid chain: Dihydroorotase (342 aa).

Zn(2+) is bound by residues His13 and His15. Substrate is bound by residues 15-17 and Asn41; that span reads HLR. Zn(2+)-binding residues include Lys97, His134, and His172. An N6-carboxylysine modification is found at Lys97. His134 lines the substrate pocket. Leu217 provides a ligand contact to substrate. Asp245 contacts Zn(2+). Asp245 is a catalytic residue. Substrate-binding residues include His249 and Ala261.

The protein belongs to the metallo-dependent hydrolases superfamily. DHOase family. Class II DHOase subfamily. Homodimer. It depends on Zn(2+) as a cofactor.

The catalysed reaction is (S)-dihydroorotate + H2O = N-carbamoyl-L-aspartate + H(+). It participates in pyrimidine metabolism; UMP biosynthesis via de novo pathway; (S)-dihydroorotate from bicarbonate: step 3/3. In terms of biological role, catalyzes the reversible cyclization of carbamoyl aspartate to dihydroorotate. The polypeptide is Dihydroorotase (Shewanella amazonensis (strain ATCC BAA-1098 / SB2B)).